Reading from the N-terminus, the 251-residue chain is Cell division protein ZapD (251 aa).

It belongs to the ZapD family. In terms of assembly, interacts with FtsZ.

The protein localises to the cytoplasm. Its function is as follows. Cell division factor that enhances FtsZ-ring assembly. Directly interacts with FtsZ and promotes bundling of FtsZ protofilaments, with a reduction in FtsZ GTPase activity. This Janthinobacterium sp. (strain Marseille) (Minibacterium massiliensis) protein is Cell division protein ZapD.